The following is a 438-amino-acid chain: GTPase Der (438 aa).

2 consecutive EngA-type G domains span residues 4 to 168 (PVVA…DDNS) and 177 to 352 (TKVC…NNYS). GTP-binding positions include 10–17 (GRANVGKS), 57–61 (DTGGL), 120–123 (NKID), 183–190 (GKPNVGKS), 230–234 (DTAGL), and 295–298 (NKWD). One can recognise a KH-like domain in the interval 353 to 437 (MRISTGVLND…PLQFEFKTRG (85 aa)).

Belongs to the TRAFAC class TrmE-Era-EngA-EngB-Septin-like GTPase superfamily. EngA (Der) GTPase family. As to quaternary structure, associates with the 50S ribosomal subunit.

In terms of biological role, GTPase that plays an essential role in the late steps of ribosome biogenesis. The polypeptide is GTPase Der (Finegoldia magna (strain ATCC 29328 / DSM 20472 / WAL 2508) (Peptostreptococcus magnus)).